A 418-amino-acid polypeptide reads, in one-letter code: D-amino acid dehydrogenase (418 aa).

An FAD-binding site is contributed by 3-17; that stretch reads VLILGSGVVGVATAY.

The protein belongs to the DadA oxidoreductase family. FAD is required as a cofactor.

It catalyses the reaction a D-alpha-amino acid + A + H2O = a 2-oxocarboxylate + AH2 + NH4(+). It participates in amino-acid degradation; D-alanine degradation; NH(3) and pyruvate from D-alanine: step 1/1. Its function is as follows. Oxidative deamination of D-amino acids. The polypeptide is D-amino acid dehydrogenase (Granulibacter bethesdensis (strain ATCC BAA-1260 / CGDNIH1)).